The following is a 222-amino-acid chain: Prolactin-3B1 (222 aa).

The signal sequence occupies residues 1 to 31; the sequence is MKLSLSQPCSFSGALLLLAVSNLLVWEKVTS. Disulfide bonds link Cys82–Cys197 and Cys214–Cys222.

It belongs to the somatotropin/prolactin family.

It is found in the secreted. The polypeptide is Prolactin-3B1 (Prl3b1) (Mus musculus (Mouse)).